A 391-amino-acid chain; its full sequence is Phosphoglycerate kinase (391 aa).

Residues 21 to 23 (DLN), arginine 36, 59 to 62 (HLGR), arginine 113, and arginine 146 contribute to the substrate site. Residues lysine 197, glutamate 319, and 345-348 (GGDT) each bind ATP.

Belongs to the phosphoglycerate kinase family. Monomer.

It localises to the cytoplasm. The enzyme catalyses (2R)-3-phosphoglycerate + ATP = (2R)-3-phospho-glyceroyl phosphate + ADP. It functions in the pathway carbohydrate degradation; glycolysis; pyruvate from D-glyceraldehyde 3-phosphate: step 2/5. The chain is Phosphoglycerate kinase from Shewanella putrefaciens (strain CN-32 / ATCC BAA-453).